The primary structure comprises 418 residues: Queuine tRNA-ribosyltransferase accessory subunit 2 (418 aa).

Zn(2+) contacts are provided by Cys325, Cys327, Cys330, and His356.

This sequence belongs to the queuine tRNA-ribosyltransferase family. QTRT2 subfamily. Heterodimer of a catalytic subunit and an accessory subunit. Zn(2+) is required as a cofactor.

Its subcellular location is the cytoplasm. Functionally, non-catalytic subunit of the queuine tRNA-ribosyltransferase (TGT) that catalyzes the base-exchange of a guanine (G) residue with queuine (Q) at position 34 (anticodon wobble position) in tRNAs with GU(N) anticodons (tRNA-Asp, -Asn, -His and -Tyr), resulting in the hypermodified nucleoside queuosine (7-(((4,5-cis-dihydroxy-2-cyclopenten-1-yl)amino)methyl)-7-deazaguanosine). The sequence is that of Queuine tRNA-ribosyltransferase accessory subunit 2 from Drosophila yakuba (Fruit fly).